The primary structure comprises 586 residues: DNA-directed RNA polymerase subunit beta' (586 aa).

The Zn(2+) site is built by Cys-64, Cys-66, Cys-85, and Cys-88. Positions 448, 450, and 452 each coordinate Mg(2+).

The protein belongs to the RNA polymerase beta' chain family. RpoC1 subfamily. In terms of assembly, in plastids the minimal PEP RNA polymerase catalytic core is composed of four subunits: alpha, beta, beta', and beta''. When a (nuclear-encoded) sigma factor is associated with the core the holoenzyme is formed, which can initiate transcription. It depends on Mg(2+) as a cofactor. Zn(2+) serves as cofactor.

The protein resides in the plastid. The protein localises to the chloroplast. It carries out the reaction RNA(n) + a ribonucleoside 5'-triphosphate = RNA(n+1) + diphosphate. DNA-dependent RNA polymerase catalyzes the transcription of DNA into RNA using the four ribonucleoside triphosphates as substrates. The sequence is that of DNA-directed RNA polymerase subunit beta' from Euglena gracilis.